The following is a 146-amino-acid chain: MORN repeat-containing protein 4 (146 aa).

4 MORN repeats span residues 16–38 (YRGE…DGGT), 39–61 (YLGH…DGSR), 62–84 (YEGE…DNMT), and 85–107 (FEGE…DGSH).

In terms of assembly, interacts with MYO3A.

Its subcellular location is the cytoplasm. It localises to the cell projection. The protein localises to the filopodium tip. It is found in the stereocilium. Plays a role in promoting axonal degeneration following neuronal injury by toxic insult or trauma. This chain is MORN repeat-containing protein 4 (Morn4), found in Mus musculus (Mouse).